Here is a 238-residue protein sequence, read N- to C-terminus: MEATQFQAMLEERGISLSSQALAQFERYYELLVEWNEKMNLTAITDKPGVYVKHFFDSVSPAFYYDFSEPFSLCDVGAGAGFPSIPLKICFPHLRVSIVDSLQKRIRFLQHLVGELGLKDIALYHDRAETFARQKGMRESFDVVTARAVARMPVLAELCLPLTKVGGTFLAMKAASAPEELKEGEKAIAVLGGEVTATETFMLPFEEGERTIIFVQKTKKTPARYPRKPGTPNKQPIQ.

S-adenosyl-L-methionine-binding positions include G77, F82, 128 to 129 (AE), and R147. A disordered region spans residues 219–238 (KKTPARYPRKPGTPNKQPIQ).

The protein belongs to the methyltransferase superfamily. RNA methyltransferase RsmG family.

It localises to the cytoplasm. Functionally, specifically methylates the N7 position of guanine in position 535 of 16S rRNA. This is Ribosomal RNA small subunit methyltransferase G from Geobacillus thermodenitrificans (strain NG80-2).